A 179-amino-acid chain; its full sequence is Acireductone dioxygenase (179 aa).

The segment at 1–21 is disordered; the sequence is MVQAWYMDDSTEDQRKPHHLQ. Fe(2+) is bound by residues His-88, His-90, Glu-94, and His-133. 4 residues coordinate Ni(2+): His-88, His-90, Glu-94, and His-133.

The protein belongs to the acireductone dioxygenase (ARD) family. As to quaternary structure, monomer. Interacts with MMP14. The cofactor is Fe(2+). Ni(2+) is required as a cofactor.

It localises to the cytoplasm. It is found in the nucleus. Its subcellular location is the cell membrane. It catalyses the reaction 1,2-dihydroxy-5-(methylsulfanyl)pent-1-en-3-one + O2 = 4-methylsulfanyl-2-oxobutanoate + formate + 2 H(+). It carries out the reaction 1,2-dihydroxy-5-(methylsulfanyl)pent-1-en-3-one + O2 = 3-(methylsulfanyl)propanoate + CO + formate + 2 H(+). It functions in the pathway amino-acid biosynthesis; L-methionine biosynthesis via salvage pathway; L-methionine from S-methyl-5-thio-alpha-D-ribose 1-phosphate: step 5/6. Functionally, catalyzes 2 different reactions between oxygen and the acireductone 1,2-dihydroxy-3-keto-5-methylthiopentene (DHK-MTPene) depending upon the metal bound in the active site. Fe-containing acireductone dioxygenase (Fe-ARD) produces formate and 2-keto-4-methylthiobutyrate (KMTB), the alpha-ketoacid precursor of methionine in the methionine recycle pathway. Ni-containing acireductone dioxygenase (Ni-ARD) produces methylthiopropionate, carbon monoxide and formate, and does not lie on the methionine recycle pathway. In Xenopus tropicalis (Western clawed frog), this protein is Acireductone dioxygenase (adi1).